We begin with the raw amino-acid sequence, 148 residues long: MEQTFIMIKPDGVQRGLVGEIISRFEKKGFSLKALKFVNVDRPFAEKHYADLSAKPFFNGLVEYIVSGPVVAMVWEGKGVVATGRKLIGATNPLASEPGTIRGDFAIDIGRNVIHGSDAVDSATKEIALWFPDGVVHWQSSLHSWIYE.

Residues Lys-9, Phe-57, Arg-85, Thr-91, Arg-102, and Asn-112 each coordinate ATP. His-115 serves as the catalytic Pros-phosphohistidine intermediate.

It belongs to the NDK family. Mg(2+) serves as cofactor. In terms of processing, the N-terminus is blocked.

It catalyses the reaction a 2'-deoxyribonucleoside 5'-diphosphate + ATP = a 2'-deoxyribonucleoside 5'-triphosphate + ADP. The catalysed reaction is a ribonucleoside 5'-diphosphate + ATP = a ribonucleoside 5'-triphosphate + ADP. Functionally, major role in the synthesis of nucleoside triphosphates other than ATP. The ATP gamma phosphate is transferred to the NDP beta phosphate via a ping-pong mechanism, using a phosphorylated active-site intermediate. The polypeptide is Nucleoside diphosphate kinase 1 (NDPK1) (Spinacia oleracea (Spinach)).